The following is a 2116-amino-acid chain: Unconventional myosin-VIIb (2116 aa).

Positions 65–760 (QGVDDMIRLG…QDTLLEVQRS (696 aa)) constitute a Myosin motor domain. 158–165 (GESGAGKT) contributes to the ATP binding site. An actin-binding region spans residues 637–659 (LDQLMKILTNCQPYFIRCIKPNE). 6 consecutive IQ domains span residues 745–765 (IFLR…VLDR), 763–792 (LDRA…AAVT), 786–815 (QRRA…GFER), 814–834 (ERLQ…AMRQ), 832–861 (MRQR…AVVV), and 855–884 (KRRA…NAPL). Position 904 is a phosphoserine (Ser904). The mediates interaction with ANKS4B stretch occupies residues 916-1542 (EKVFGFLPAM…KKQGLLASEN (627 aa)). A MyTH4 1 domain is found at 989-1192 (HIRRPLRYPL…PTWLELQAVK (204 aa)). One can recognise an FERM 1 domain in the interval 1197-1506 (IPIQVILATG…EGLKERSIFA (310 aa)). Ser1371 carries the phosphoserine modification. An SH3 domain is found at 1501–1567 (ERSIFAMALQ…PMACLYTIPT (67 aa)). Residues 1501–2116 (ERSIFAMALQ…GSKAPALAST (616 aa)) are mediates interaction with CDHR2, CDHR5 and USH1C. 2 MyTH4 domains span residues 1644 to 1793 (YSCE…EAAE) and 1790 to 1896 (EAAE…KLWL). Ser1645 carries the post-translational modification Phosphoserine. The 304-residue stretch at 1799–2102 (ICHKIYFPND…SYVQQLLSAM (304 aa)) folds into the FERM 2 domain.

It belongs to the TRAFAC class myosin-kinesin ATPase superfamily. Myosin family. As to quaternary structure, part of the IMAC/intermicrovillar adhesion complex/intermicrovillar tip-link complex composed of ANKS4B, MYO7B, USH1C, CDHR2 and CDHR5. Interacts with CDHR2. Interacts with CDHR5. Interacts with USH1C. Interacts with ANKS4B; requires initial interaction with USH1C. Interacts with CALML4; the interaction mediates the association of CALML4 with the IMAC/intermicrovillar adhesion complex.

It localises to the cytoplasm. The protein localises to the cytoskeleton. It is found in the cell projection. Its subcellular location is the microvillus. Its function is as follows. Myosins are actin-based motor molecules with ATPase activity. Their highly divergent tails are presumed to bind to membranous compartments, which would be moved relative to actin filaments. As part of the intermicrovillar adhesion complex/IMAC plays a role in epithelial brush border differentiation, controlling microvilli organization and length. May link the complex to the actin core bundle of microvilli. The sequence is that of Unconventional myosin-VIIb from Homo sapiens (Human).